The primary structure comprises 538 residues: Cytochrome P450 monooxygenase claM (538 aa).

The chain crosses the membrane as a helical span at residues 36 to 56; that stretch reads LSIGLVVLIGAISSFLLQQFL. 2 N-linked (GlcNAc...) asparagine glycosylation sites follow: Asn306 and Asn425. Cys472 serves as a coordination point for heme.

It belongs to the cytochrome P450 family. Heme serves as cofactor.

It is found in the membrane. It catalyses the reaction 2 nataloe emodin + reduced [NADPH--hemoprotein reductase] + O2 = cladofulvin + oxidized [NADPH--hemoprotein reductase] + 2 H2O + H(+). The protein operates within pigment biosynthesis. Cytochrome P450 monooxygenase; part of the gene cluster that mediates the biosynthesis of the bianthraquinone cladofulvin, a conidial pigment not required for virulence but that plays a role in fitness and resistance to environmental stresses including UV light and low-temperature stress. The pathway begins with the synthesis of atrochrysone thioester by the polyketide synthase (PKS) claG. The atrochrysone carboxyl ACP thioesterase claF then breaks the thioester bond and releases the atrochrysone carboxylic acid from claG. This compound is decarboxylated by claH to yield emodin, which is further converted to chrysophanol hydroquinone by the reductase claC and the dehydratase claB. The cytochrome monooxygenase P450 claM then catalyzes the dimerization of nataloe-emodin to cladofulvin. The sequence is that of Cytochrome P450 monooxygenase claM from Passalora fulva (Tomato leaf mold).